The chain runs to 302 residues: Probable alpha-L-glutamate ligase (302 aa).

An ATP-grasp domain is found at 112-294; it reads LQLLLKAGIP…IAAEIIDYIE (183 aa). ATP contacts are provided by residues K148, 185 to 186, D194, and 218 to 220; these read DF and RAN. The Mg(2+) site is built by D255, E267, and N269. Mn(2+) is bound by residues D255, E267, and N269.

This sequence belongs to the RimK family. The cofactor is Mg(2+). Requires Mn(2+) as cofactor.

This chain is Probable alpha-L-glutamate ligase, found in Haemophilus influenzae (strain ATCC 51907 / DSM 11121 / KW20 / Rd).